A 274-amino-acid polypeptide reads, in one-letter code: Penicillin-insensitive murein endopeptidase (274 aa).

Positions 1–19 (MNKTAIALLALLASSASLA) are cleaved as a signal peptide. 3 cysteine pairs are disulfide-bonded: cysteine 44-cysteine 265, cysteine 187-cysteine 235, and cysteine 216-cysteine 223. Zn(2+)-binding residues include histidine 110, histidine 113, aspartate 120, aspartate 147, histidine 150, and histidine 211. Residues 227 to 274 (PLPPPGDGCGAELQSWFEPPKPGTTKPEKKTPPPLPPSCQALLDEHVI) form a disordered region.

It belongs to the peptidase M74 family. Dimer. Zn(2+) serves as cofactor.

The protein localises to the periplasm. Its function is as follows. Murein endopeptidase that cleaves the D-alanyl-meso-2,6-diamino-pimelyl amide bond that connects peptidoglycan strands. Likely plays a role in the removal of murein from the sacculus. The sequence is that of Penicillin-insensitive murein endopeptidase from Escherichia coli (strain ATCC 8739 / DSM 1576 / NBRC 3972 / NCIMB 8545 / WDCM 00012 / Crooks).